We begin with the raw amino-acid sequence, 110 residues long: Cytochrome c6 (110 aa).

A signal peptide spans 1 to 25; that stretch reads MKKTLSVLFTAFSFCVIGFTQVAFA. Residues Cys39, Cys42, His43, and Met83 each contribute to the heme c site.

Belongs to the cytochrome c family. PetJ subfamily. In terms of assembly, monomer. Post-translationally, binds 1 heme c group covalently per subunit.

Its subcellular location is the plastid. It is found in the chloroplast thylakoid lumen. Its function is as follows. Functions as an electron carrier between membrane-bound cytochrome b6-f and photosystem I in oxygenic photosynthesis. The protein is Cytochrome c6 (petJ) of Porphyra purpurea (Red seaweed).